The following is a 154-amino-acid chain: 6,7-dimethyl-8-ribityllumazine synthase (154 aa).

5-amino-6-(D-ribitylamino)uracil contacts are provided by residues phenylalanine 21, 55 to 57 (AFE), and 79 to 81 (CVI). (2S)-2-hydroxy-3-oxobutyl phosphate is bound at residue 84–85 (AT). Catalysis depends on histidine 87, which acts as the Proton donor. Phenylalanine 111 is a 5-amino-6-(D-ribitylamino)uracil binding site. Arginine 125 is a (2S)-2-hydroxy-3-oxobutyl phosphate binding site.

It belongs to the DMRL synthase family. As to quaternary structure, forms an icosahedral capsid composed of 60 subunits, arranged as a dodecamer of pentamers.

It catalyses the reaction (2S)-2-hydroxy-3-oxobutyl phosphate + 5-amino-6-(D-ribitylamino)uracil = 6,7-dimethyl-8-(1-D-ribityl)lumazine + phosphate + 2 H2O + H(+). It functions in the pathway cofactor biosynthesis; riboflavin biosynthesis; riboflavin from 2-hydroxy-3-oxobutyl phosphate and 5-amino-6-(D-ribitylamino)uracil: step 1/2. In terms of biological role, catalyzes the formation of 6,7-dimethyl-8-ribityllumazine by condensation of 5-amino-6-(D-ribitylamino)uracil with 3,4-dihydroxy-2-butanone 4-phosphate. This is the penultimate step in the biosynthesis of riboflavin. This chain is 6,7-dimethyl-8-ribityllumazine synthase, found in Macrococcus caseolyticus (strain JCSC5402) (Macrococcoides caseolyticum).